We begin with the raw amino-acid sequence, 224 residues long: Ribose-5-phosphate isomerase A (224 aa).

Substrate-binding positions include 26-29 (TGST), 81-84 (DGAD), and 94-97 (KGGG). E103 functions as the Proton acceptor in the catalytic mechanism. K121 serves as a coordination point for substrate.

Belongs to the ribose 5-phosphate isomerase family. Homodimer.

The enzyme catalyses aldehydo-D-ribose 5-phosphate = D-ribulose 5-phosphate. Its pathway is carbohydrate degradation; pentose phosphate pathway; D-ribose 5-phosphate from D-ribulose 5-phosphate (non-oxidative stage): step 1/1. Functionally, catalyzes the reversible conversion of ribose-5-phosphate to ribulose 5-phosphate. This is Ribose-5-phosphate isomerase A from Listeria monocytogenes serotype 4b (strain CLIP80459).